A 699-amino-acid polypeptide reads, in one-letter code: Macoilin-2 (699 aa).

The next 4 membrane-spanning stretches (helical) occupy residues 28-48 (TFLYLKFLVVWALVLLADFVL), 75-95 (AFSVFFVCVAFTSDIICLLFI), 120-140 (VCLPTVSLWILFVYIEAAIRF), and 154-174 (FAAHCIGYPVVTLGFGFKSYV). 4 disordered regions span residues 219-289 (AAAA…SILP), 322-411 (LLKD…PNNQ), 432-451 (LQASRQTEQDLRSQLGSLGT), and 679-699 (FMDTSPSGLDPNASVYQPLKK). N-linked (GlcNAc...) asparagine glycosylation is found at Asn-241, Asn-267, Asn-345, and Asn-365. The span at 257 to 271 (LEYREKERGKNESKK) shows a compositional bias: basic and acidic residues. The span at 329 to 346 (SSSSSSTSSNSNKNYKNA) shows a compositional bias: low complexity. A compositionally biased stretch (low complexity) spans 366–382 (GSVPSSSGPSSSASSSS). Asn-690 carries N-linked (GlcNAc...) asparagine glycosylation.

It belongs to the macoilin family.

The protein localises to the nucleus membrane. The protein resides in the cell projection. It localises to the axon. It is found in the rough endoplasmic reticulum membrane. In terms of biological role, may play a role in the regulation of neuronal activity. This chain is Macoilin-2, found in Danio rerio (Zebrafish).